We begin with the raw amino-acid sequence, 402 residues long: uncharacterized protein (402 aa).

The next 11 membrane-spanning stretches (helical) occupy residues 12-32, 48-68, 80-100, 101-121, 134-154, 168-188, 212-232, 248-268, 291-311, 339-359, and 367-387; these read FWLI…ITSV, GAAG…SPLA, TLWL…TGYT, AALF…NVLL, GIMI…ASGV, QAFL…IPQL, WYVT…IAWF, WMVS…PVLA, GLLA…IGIG, MSQS…GYLF, and MPIV…QGAG.

Belongs to the major facilitator superfamily. Cyanate porter (TC 2.A.1.17) family.

Its subcellular location is the cell membrane. This is an uncharacterized protein from Bacillus subtilis (strain 168).